The sequence spans 102 residues: RNA-binding protein Hfq (102 aa).

In terms of domain architecture, Sm spans 9–68; the sequence is DPFLNALRRERVPVSIYLVNGIKLQGQIESFDQFVILLKNTVSQMVYKHAISTVVPSRPV. The disordered stretch occupies residues 63 to 102; that stretch reads VPSRPVSHHSNNAGGGASNNYHHGSNAQGSTAQQDSEETE. The segment covering 70 to 88 has biased composition (low complexity); sequence HHSNNAGGGASNNYHHGSN.

The protein belongs to the Hfq family. Homohexamer.

In terms of biological role, RNA chaperone that binds small regulatory RNA (sRNAs) and mRNAs to facilitate mRNA translational regulation in response to envelope stress, environmental stress and changes in metabolite concentrations. Also binds with high specificity to tRNAs. The polypeptide is RNA-binding protein Hfq (Salmonella agona (strain SL483)).